Consider the following 227-residue polypeptide: 2-C-methyl-D-erythritol 4-phosphate cytidylyltransferase (227 aa).

The protein belongs to the IspD/TarI cytidylyltransferase family. IspD subfamily.

The enzyme catalyses 2-C-methyl-D-erythritol 4-phosphate + CTP + H(+) = 4-CDP-2-C-methyl-D-erythritol + diphosphate. It functions in the pathway isoprenoid biosynthesis; isopentenyl diphosphate biosynthesis via DXP pathway; isopentenyl diphosphate from 1-deoxy-D-xylulose 5-phosphate: step 2/6. Catalyzes the formation of 4-diphosphocytidyl-2-C-methyl-D-erythritol from CTP and 2-C-methyl-D-erythritol 4-phosphate (MEP). This chain is 2-C-methyl-D-erythritol 4-phosphate cytidylyltransferase, found in Nostoc punctiforme (strain ATCC 29133 / PCC 73102).